The sequence spans 337 residues: 4-hydroxythreonine-4-phosphate dehydrogenase (337 aa).

Positions 138 and 139 each coordinate substrate. Positions 168, 212, and 267 each coordinate a divalent metal cation. Substrate is bound by residues K275, N284, and R293.

It belongs to the PdxA family. Homodimer. It depends on Zn(2+) as a cofactor. Mg(2+) serves as cofactor. Requires Co(2+) as cofactor.

The protein resides in the cytoplasm. The catalysed reaction is 4-(phosphooxy)-L-threonine + NAD(+) = 3-amino-2-oxopropyl phosphate + CO2 + NADH. The protein operates within cofactor biosynthesis; pyridoxine 5'-phosphate biosynthesis; pyridoxine 5'-phosphate from D-erythrose 4-phosphate: step 4/5. Functionally, catalyzes the NAD(P)-dependent oxidation of 4-(phosphooxy)-L-threonine (HTP) into 2-amino-3-oxo-4-(phosphooxy)butyric acid which spontaneously decarboxylates to form 3-amino-2-oxopropyl phosphate (AHAP). This is 4-hydroxythreonine-4-phosphate dehydrogenase from Beijerinckia indica subsp. indica (strain ATCC 9039 / DSM 1715 / NCIMB 8712).